The primary structure comprises 624 residues: DNA-directed RNA polymerase subunit gamma (624 aa).

Positions 70, 72, 85, and 88 each coordinate Zn(2+). 3 residues coordinate Mg(2+): aspartate 466, aspartate 468, and aspartate 470.

This sequence belongs to the RNA polymerase beta' chain family. RpoC1 subfamily. In terms of assembly, in cyanobacteria the RNAP catalytic core is composed of 2 alpha, 1 beta, 1 beta', 1 gamma and 1 omega subunit. When a sigma factor is associated with the core the holoenzyme is formed, which can initiate transcription. Mg(2+) is required as a cofactor. It depends on Zn(2+) as a cofactor.

It carries out the reaction RNA(n) + a ribonucleoside 5'-triphosphate = RNA(n+1) + diphosphate. DNA-dependent RNA polymerase catalyzes the transcription of DNA into RNA using the four ribonucleoside triphosphates as substrates. This chain is DNA-directed RNA polymerase subunit gamma, found in Synechococcus sp. (strain ATCC 27144 / PCC 6301 / SAUG 1402/1) (Anacystis nidulans).